The chain runs to 533 residues: D-3-phosphoglycerate dehydrogenase (533 aa).

At Ala-2 the chain carries N-acetylalanine. At Ser-14 the chain carries Phosphoserine. Lys-21 is subject to N6-acetyllysine; alternate. A Glycyl lysine isopeptide (Lys-Gly) (interchain with G-Cter in SUMO1); alternate cross-link involves residue Lys-21. Lys-21 participates in a covalent cross-link: Glycyl lysine isopeptide (Lys-Gly) (interchain with G-Cter in SUMO2); alternate. Lys-58 carries the N6-acetyllysine modification. NAD(+) is bound by residues Thr-78, 155–156 (RI), Asp-175, Thr-207, 234–236 (CAR), and Asp-260. Thr-78 bears the Phosphothreonine mark. Residue Arg-236 is part of the active site. Glu-265 is a catalytic residue. The active-site Proton donor is the His-283. Residue 283-286 (HLGA) coordinates NAD(+).

The protein belongs to the D-isomer specific 2-hydroxyacid dehydrogenase family. Homotetramer. In terms of tissue distribution, liver, kidney, brain, testis.

It carries out the reaction (2R)-3-phosphoglycerate + NAD(+) = 3-phosphooxypyruvate + NADH + H(+). The protein operates within amino-acid biosynthesis; L-serine biosynthesis; L-serine from 3-phospho-D-glycerate: step 1/3. Functionally, catalyzes the reversible oxidation of 3-phospho-D-glycerate to 3-phosphonooxypyruvate, the first step of the phosphorylated L-serine biosynthesis pathway. Does not catalyze the reversible oxidation of 2-hydroxyglutarate to 2-oxoglutarate and the reversible oxidation of (S)-malate to oxaloacetate. The chain is D-3-phosphoglycerate dehydrogenase (Phgdh) from Rattus norvegicus (Rat).